A 621-amino-acid polypeptide reads, in one-letter code: DNA-directed RNA polymerase subunit gamma (621 aa).

Residues Asp463, Asp465, and Asp467 each contribute to the Mg(2+) site.

It belongs to the RNA polymerase beta' chain family. RpoC1 subfamily. In cyanobacteria the RNAP catalytic core is composed of 2 alpha, 1 beta, 1 beta', 1 gamma and 1 omega subunit. When a sigma factor is associated with the core the holoenzyme is formed, which can initiate transcription. The cofactor is Mg(2+).

It catalyses the reaction RNA(n) + a ribonucleoside 5'-triphosphate = RNA(n+1) + diphosphate. DNA-dependent RNA polymerase catalyzes the transcription of DNA into RNA using the four ribonucleoside triphosphates as substrates. This is DNA-directed RNA polymerase subunit gamma from Nostoc commune.